The sequence spans 222 residues: MNKLSNAFSVLAFADEDAPMASSSSTGKQEESVNGSLEDGDYKQPLVWIDLEMTGLNVEVDRILEIACIITNGDLTQSVEGPDLVVRQTKDCLDKMDDWCQTHHGASGLTKKVLLSAITEREAEQKVIEFVKKHVGSGNPLLAGNSVYVDFLFLKKYMPELAALFPHILVDVSSVKALCARWFPIERRKAPAKKNNHRAMDDIRESIKELKYYKKTIFKARR.

The interval Pro19–Glu38 is disordered. The span at Ala21–Gly35 shows a compositional bias: polar residues. In terms of domain architecture, Exonuclease spans Leu46–Leu210. His167 is a catalytic residue.

The protein belongs to the oligoribonuclease family.

Functionally, 3'-to-5' exoribonuclease specific for small oligoribonucleotides. The chain is Oligoribonuclease from Arabidopsis thaliana (Mouse-ear cress).